A 326-amino-acid polypeptide reads, in one-letter code: Nucleoporin Nup37 (326 aa).

WD repeat units lie at residues 6 to 54, 61 to 109, 115 to 154, 159 to 195, 199 to 237, 242 to 282, and 287 to 324; these read SRNA…FQEE, IQYK…LFTS, NEYK…IWNL, TAHF…FYDL, QAIL…IWDI, YPQN…QFQI, and HPQP…FWVT.

In terms of assembly, component of the Nup107-160 subcomplex of the nuclear pore complex (NPC). The Nup107-160 subcomplex includes NUP160, NUP133, NUP107, NUP98, NUP85, NUP43, NUP37, SEH1 and SEC13.

It is found in the chromosome. The protein localises to the centromere. It localises to the kinetochore. Its subcellular location is the nucleus. The protein resides in the nuclear pore complex. In terms of biological role, component of the Nup107-160 subcomplex of the nuclear pore complex (NPC). The Nup107-160 subcomplex is required for the assembly of a functional NPC. The Nup107-160 subcomplex is also required for normal kinetochore microtubule attachment, mitotic progression and chromosome segregation. In Homo sapiens (Human), this protein is Nucleoporin Nup37 (NUP37).